A 657-amino-acid chain; its full sequence is Probable intron-encoded endonuclease aI2 (657 aa).

A COX1 exons 1 to 2 encoded region spans residues 1–245; the sequence is MKQMSYVTRW…TYEHLFWFFG (245 aa). Transmembrane regions (helical) follow at residues 19-39, 69-89, 103-123, 152-172, 188-208, and 269-289; these read IGMT…GMSV, LLMM…NFFL, LNNI…CSVL, AMFA…NFMV, PLFA…LPVL, and MYFI…ANMV. Residues 246–657 are COX1 intron 2 encoded; it reads QWWPTNYVNN…KFENKWNKKF (412 aa).

This sequence in the C-terminal section; belongs to the LAGLIDADG endonuclease family. It in the N-terminal section; belongs to the heme-copper respiratory oxidase family. In terms of processing, the mature protein may arise from proteolytic cleavage of an in-frame translation of COX1 exons 1 and 2 plus intron 2, containing the aI2 open reading frame.

The protein localises to the mitochondrion. It localises to the membrane. Functionally, mitochondrial DNA endonuclease involved in intron homing. This is Probable intron-encoded endonuclease aI2 (aI2) from Debaryomyces hansenii (strain ATCC 36239 / CBS 767 / BCRC 21394 / JCM 1990 / NBRC 0083 / IGC 2968) (Yeast).